A 421-amino-acid polypeptide reads, in one-letter code: MAFFAGISDWVAQRLQRNSETARLDLERAYEAALYITALETEYASGRSLRRLPSQLSARQQTSLQAELRQTLRSLRHYRQRYRRHQPVQLQAGLALGRPGMGMPTIAHEKLQLIEQVLARYGQPTVHSSNPDDSQLMTSKNNSKPVPDPESDDEYLISQTSFLPRSIFGAFADLRQQLDPKAEDQIVQNFRSRKGKTLIALRFVLLLVLVPLLTQQISKSFIVGPIVDRLRSQDPEAIFLNFQMEEEAFVKLNQYQQLLRFQHYLKEAPPLTEAEIDERVREKAEEIAVEYRQESSNAIKNIFADLISAAAFAILLISSQEEIQLLKSFIDEVVYGISDSAKAFIIILFTDIFVGFHSPHGWEVILESISRHFGIPENRSFIFLFIATFPVILDTIFKYWIFRYLNRISPSAVATYRNMNE.

The tract at residues 124–153 (PTVHSSNPDDSQLMTSKNNSKPVPDPESDD) is disordered. A compositionally biased stretch (polar residues) spans 125-144 (TVHSSNPDDSQLMTSKNNSK). Helical transmembrane passes span 203–223 (FVLLLVLVPLLTQQISKSFIV), 298–318 (AIKNIFADLISAAAFAILLIS), 345–365 (IIILFTDIFVGFHSPHGWEVI), and 381–401 (FIFLFIATFPVILDTIFKYWI).

The protein belongs to the CemA family.

It localises to the cell inner membrane. In terms of biological role, required for H(+) efflux immediately after light irradiation to form a rapid H(+) concentration gradient across the thylakoid membranes. Together with PxcL, contributes to transient H(+) uptake following dark to light transition. The chain is Proton extrusion protein PxcA from Synechococcus sp. (strain ATCC 27144 / PCC 6301 / SAUG 1402/1) (Anacystis nidulans).